The following is a 35-amino-acid chain: Photosystem II reaction center protein T (35 aa).

The helical transmembrane segment at 3-23 (ALVYTFLLVSTLGIIFFAIFF) threads the bilayer.

It belongs to the PsbT family. In terms of assembly, PSII is composed of 1 copy each of membrane proteins PsbA, PsbB, PsbC, PsbD, PsbE, PsbF, PsbH, PsbI, PsbJ, PsbK, PsbL, PsbM, PsbT, PsbY, PsbZ, Psb30/Ycf12, at least 3 peripheral proteins of the oxygen-evolving complex and a large number of cofactors. It forms dimeric complexes.

The protein localises to the plastid. The protein resides in the chloroplast thylakoid membrane. Its function is as follows. Found at the monomer-monomer interface of the photosystem II (PS II) dimer, plays a role in assembly and dimerization of PSII. PSII is a light-driven water plastoquinone oxidoreductase, using light energy to abstract electrons from H(2)O, generating a proton gradient subsequently used for ATP formation. This Pisum sativum (Garden pea) protein is Photosystem II reaction center protein T.